We begin with the raw amino-acid sequence, 368 residues long: Phospho-N-acetylmuramoyl-pentapeptide-transferase (368 aa).

Helical transmembrane passes span Tyr-23–Gly-43, Val-72–Ala-92, His-98–Tyr-118, Val-139–Leu-159, Leu-170–Ser-190, Gly-201–Cys-221, Ala-238–Phe-258, Val-281–Val-301, and Lys-345–Leu-365.

This sequence belongs to the glycosyltransferase 4 family. MraY subfamily. The cofactor is Mg(2+).

Its subcellular location is the cell inner membrane. The enzyme catalyses UDP-N-acetyl-alpha-D-muramoyl-L-alanyl-gamma-D-glutamyl-meso-2,6-diaminopimeloyl-D-alanyl-D-alanine + di-trans,octa-cis-undecaprenyl phosphate = di-trans,octa-cis-undecaprenyl diphospho-N-acetyl-alpha-D-muramoyl-L-alanyl-D-glutamyl-meso-2,6-diaminopimeloyl-D-alanyl-D-alanine + UMP. The protein operates within cell wall biogenesis; peptidoglycan biosynthesis. Functionally, catalyzes the initial step of the lipid cycle reactions in the biosynthesis of the cell wall peptidoglycan: transfers peptidoglycan precursor phospho-MurNAc-pentapeptide from UDP-MurNAc-pentapeptide onto the lipid carrier undecaprenyl phosphate, yielding undecaprenyl-pyrophosphoryl-MurNAc-pentapeptide, known as lipid I. In Chlorobaculum tepidum (strain ATCC 49652 / DSM 12025 / NBRC 103806 / TLS) (Chlorobium tepidum), this protein is Phospho-N-acetylmuramoyl-pentapeptide-transferase.